A 762-amino-acid chain; its full sequence is MAIQTSNLGYPRIGLQREWKKTLEAFWSNKINEEQFLTTMKEIRLQHVKVQQEKGIELIPIGDFTYYDHVLDTAYMLGFIPSRFSEFTSYLDVYFAMARGSKDHVASEMTKWFNTNYHYIVPEYEEGLQISLKDNRPLRLYEEAKQELGVDGKPVILGPYTFLKLAKGYTQEQFATILKQLVAPYVQLLSELHAAGAQIIQVDEPIFASLTKEEVQQAKEIYEAIRKEVPNATLLLQTYFDSVEENYEEIITFPVSSIGLDFVHGKEGNLNAISKYGFPADKTLAVGCIDGRNIWRADLDEVLTLFTTLQKQVQTKDLIVQPSCSLLHTPIDKTEETHLSTELFDALAFANQKLEELVLIHSALTQGTESISNELETYRNVHHTIRSSAARNREDVKAARTALKEEDFSRPLPFEKRYELQQVALKLPLLPTTTIGSFPQTTEVRQTRKEWRNGIISNEQYEQFIEKETEKWIRYQEEIGLDVLVHGEFERTDMVEYFGERLAGFSFTKNGWVQSYGSRCVKPPVIYGDVAFINGMTIKETVYAQSLTEKVVKGMLTGPVTILNWSFVRNDIPRKEVSYQIALALRHEIELLESSGIRVIQVDEPALREGMPLKEKDWDAYITWAVQSFLLATSSVANETQIHTHMCYSNFEDIVDAIRALDADVISIETSRSHGEFIDTLKHTTYEKGIGLGVYDIHSPRVPSKDEMYKIVEQSLQVCDPKYFWINPDCGLKTRRTEEVIPALEHMVQAAKDARSLLKTNA.

5-methyltetrahydropteroyltri-L-glutamate-binding positions include 17-20 (REWK) and Lys-111. Residues 435 to 437 (IGS) and Glu-488 each bind L-homocysteine. L-methionine-binding positions include 435–437 (IGS) and Glu-488. 5-methyltetrahydropteroyltri-L-glutamate is bound by residues 519–520 (RC) and Trp-565. An L-homocysteine-binding site is contributed by Asp-603. Asp-603 lines the L-methionine pocket. Position 609 (Glu-609) interacts with 5-methyltetrahydropteroyltri-L-glutamate. 3 residues coordinate Zn(2+): His-645, Cys-647, and Glu-669. His-698 acts as the Proton donor in catalysis. Residue Cys-730 participates in Zn(2+) binding.

The protein belongs to the vitamin-B12 independent methionine synthase family. Zn(2+) is required as a cofactor.

It catalyses the reaction 5-methyltetrahydropteroyltri-L-glutamate + L-homocysteine = tetrahydropteroyltri-L-glutamate + L-methionine. It participates in amino-acid biosynthesis; L-methionine biosynthesis via de novo pathway; L-methionine from L-homocysteine (MetE route): step 1/1. Functionally, catalyzes the transfer of a methyl group from 5-methyltetrahydrofolate to homocysteine resulting in methionine formation. This is 5-methyltetrahydropteroyltriglutamate--homocysteine methyltransferase from Bacillus anthracis (strain A0248).